Consider the following 391-residue polypeptide: Arrestin-C (391 aa).

A compositionally biased stretch (basic and acidic residues) spans 369-379 (ARQEPGGREES). Residues 369 to 391 (ARQEPGGREESQEALAAEGDEGS) form a disordered region.

It belongs to the arrestin family. Homodimer; disulfide-linked in response to retinal illumination. Interacts with CXCR4; the interaction is dependent on the C-terminal phosphorylation of CXCR4 and modulates the calcium ion mobilization activity of CXCR4. Interacts with GPR84.

It is found in the photoreceptor inner segment. It localises to the cell projection. Its subcellular location is the cilium. The protein localises to the photoreceptor outer segment. Its function is as follows. May play a role in an as yet undefined retina-specific signal transduction. Could bind to photoactivated-phosphorylated red/green opsins. The chain is Arrestin-C (ARR3) from Sus scrofa (Pig).